The sequence spans 823 residues: Protein Shroom1 (823 aa).

Methionine 1 carries the post-translational modification N-acetylmethionine. Disordered stretches follow at residues 1 to 55, 72 to 110, and 124 to 159; these read MEAL…TERL, PTSKDAVLSTTQRPVQAVAGHSDPRSPEVQGSPGPLNRQ, and ATAHTAEPPSPPASRDAYRQRLQGAQRRVLRETSFQ. Polar residues-rich tracts occupy residues 28–50 and 72–85; these read RADSAYSSFSTASGDPETRTPSP and PTSKDAVLSTTQRP. Phosphoserine is present on residues serine 103, serine 133, serine 137, serine 166, serine 190, and serine 224. One can recognise an ASD1 domain in the interval 145–233; that stretch reads LQGAQRRVLR…SEPGKLHRVG (89 aa). The interval 181–200 is disordered; that stretch reads TAHVRSASSSQELGEEEPAR. 2 disordered regions span residues 270–303 and 349–375; these read SSTELNSGPADLGNAHRPAGRSQSVSGEVMGPCK and QTKPAGCGRRISETSVSTPGPSLPEDD. Position 383 is a phosphothreonine (threonine 383). Serine 385 carries the post-translational modification Phosphoserine. 2 disordered regions span residues 420 to 503 and 566 to 620; these read LHET…LTWG and EMGE…STQA. Polar residues-rich tracts occupy residues 444–468, 489–503, and 586–620; these read RPTSIPETTNDDIPTFDTNGTTDPS, SETPGSPHHTSLTWG, and QDLQTSQEASRSENSTPDPDQSSGQEFPEGNSTQA. An ASD2 domain is found at 517 to 796; sequence EALVQELARL…QLDTIWSDLS (280 aa).

The protein belongs to the shroom family. Interacts with F-actin.

It is found in the cytoplasm. The protein resides in the cytoskeleton. Functionally, may be involved in the assembly of microtubule arrays during cell elongation. This chain is Protein Shroom1 (Shroom1), found in Mus musculus (Mouse).